The chain runs to 482 residues: ATP synthase subunit beta (482 aa).

An ATP-binding site is contributed by 161-168 (GGAGVGKT).

It belongs to the ATPase alpha/beta chains family. F-type ATPases have 2 components, CF(1) - the catalytic core - and CF(0) - the membrane proton channel. CF(1) has five subunits: alpha(3), beta(3), gamma(1), delta(1), epsilon(1). CF(0) has three main subunits: a(1), b(2) and c(9-12). The alpha and beta chains form an alternating ring which encloses part of the gamma chain. CF(1) is attached to CF(0) by a central stalk formed by the gamma and epsilon chains, while a peripheral stalk is formed by the delta and b chains.

Its subcellular location is the cell inner membrane. It catalyses the reaction ATP + H2O + 4 H(+)(in) = ADP + phosphate + 5 H(+)(out). Its function is as follows. Produces ATP from ADP in the presence of a proton gradient across the membrane. The catalytic sites are hosted primarily by the beta subunits. This is ATP synthase subunit beta from Anaeromyxobacter dehalogenans (strain 2CP-C).